The primary structure comprises 264 residues: Thymidylate synthase (264 aa).

Residue arginine 21 coordinates dUMP. Histidine 51 is a (6R)-5,10-methylene-5,6,7,8-tetrahydrofolate binding site. A dUMP-binding site is contributed by 126–127 (RR). The active-site Nucleophile is cysteine 146. Residues 166-169 (RSAD), asparagine 177, and 207-209 (HLY) contribute to the dUMP site. Aspartate 169 is a (6R)-5,10-methylene-5,6,7,8-tetrahydrofolate binding site. Position 263 (alanine 263) interacts with (6R)-5,10-methylene-5,6,7,8-tetrahydrofolate.

The protein belongs to the thymidylate synthase family. Bacterial-type ThyA subfamily. As to quaternary structure, homodimer.

Its subcellular location is the cytoplasm. It catalyses the reaction dUMP + (6R)-5,10-methylene-5,6,7,8-tetrahydrofolate = 7,8-dihydrofolate + dTMP. Its pathway is pyrimidine metabolism; dTTP biosynthesis. Functionally, catalyzes the reductive methylation of 2'-deoxyuridine-5'-monophosphate (dUMP) to 2'-deoxythymidine-5'-monophosphate (dTMP) while utilizing 5,10-methylenetetrahydrofolate (mTHF) as the methyl donor and reductant in the reaction, yielding dihydrofolate (DHF) as a by-product. This enzymatic reaction provides an intracellular de novo source of dTMP, an essential precursor for DNA biosynthesis. This chain is Thymidylate synthase, found in Ralstonia nicotianae (strain ATCC BAA-1114 / GMI1000) (Ralstonia solanacearum).